Here is a 299-residue protein sequence, read N- to C-terminus: 33 kDa chaperonin (299 aa).

2 disulfides stabilise this stretch: C240–C242 and C273–C276.

It belongs to the HSP33 family. In terms of processing, under oxidizing conditions two disulfide bonds are formed involving the reactive cysteines. Under reducing conditions zinc is bound to the reactive cysteines and the protein is inactive.

It localises to the cytoplasm. Functionally, redox regulated molecular chaperone. Protects both thermally unfolding and oxidatively damaged proteins from irreversible aggregation. Plays an important role in the bacterial defense system toward oxidative stress. This Gloeothece citriformis (strain PCC 7424) (Cyanothece sp. (strain PCC 7424)) protein is 33 kDa chaperonin.